The sequence spans 142 residues: Protein E6 (142 aa).

2 zinc fingers span residues 27–63 (CIFC…CTKC) and 100–136 (CQHC…CRNC).

This sequence belongs to the papillomaviridae E6 protein family. As to quaternary structure, forms homodimers. Interacts with ubiquitin-protein ligase UBE3A/E6-AP; this interaction stimulates UBE3A ubiquitin activity. Interacts with host BAK1.

The protein resides in the host cytoplasm. It is found in the host nucleus. Its function is as follows. Plays a major role in the induction and maintenance of cellular transformation. E6 associates with host UBE3A/E6-AP ubiquitin-protein ligase and modulates its activity. Protects host keratinocytes from apoptosis by mediating the degradation of host BAK1. May also inhibit host immune response. This is Protein E6 from Homo sapiens (Human).